The primary structure comprises 395 residues: Putative 8-amino-7-oxononanoate synthase (395 aa).

R23 contributes to the substrate binding site. 110–111 is a binding site for pyridoxal 5'-phosphate; it reads GY. H135 is a substrate binding site. Pyridoxal 5'-phosphate is bound by residues S182, 207 to 210, and 239 to 242; these read DEAH and TFSK. The residue at position 242 (K242) is an N6-(pyridoxal phosphate)lysine. Residue T356 coordinates substrate.

It belongs to the class-II pyridoxal-phosphate-dependent aminotransferase family. BioF subfamily. As to quaternary structure, homodimer. The cofactor is pyridoxal 5'-phosphate.

It carries out the reaction 6-carboxyhexanoyl-[ACP] + L-alanine + H(+) = (8S)-8-amino-7-oxononanoate + holo-[ACP] + CO2. Its pathway is cofactor biosynthesis; biotin biosynthesis. Catalyzes the decarboxylative condensation of pimeloyl-[acyl-carrier protein] and L-alanine to produce 8-amino-7-oxononanoate (AON), [acyl-carrier protein], and carbon dioxide. The polypeptide is Putative 8-amino-7-oxononanoate synthase (bioF) (Bacillus cereus (strain B4264)).